Here is a 98-residue protein sequence, read N- to C-terminus: Small ribosomal subunit protein bS6 (98 aa).

This sequence belongs to the bacterial ribosomal protein bS6 family.

Its function is as follows. Binds together with bS18 to 16S ribosomal RNA. This chain is Small ribosomal subunit protein bS6, found in Staphylococcus carnosus (strain TM300).